We begin with the raw amino-acid sequence, 130 residues long: Small ribosomal subunit protein uS8 (130 aa).

It belongs to the universal ribosomal protein uS8 family.

In Agaricus bisporus (White button mushroom), this protein is Small ribosomal subunit protein uS8 (rps22).